Reading from the N-terminus, the 144-residue chain is Large-conductance mechanosensitive channel (144 aa).

A run of 2 helical transmembrane segments spans residues 14 to 34 and 81 to 101; these read VLDM…VTSF and GTFL…FLII.

The protein belongs to the MscL family. As to quaternary structure, homopentamer.

The protein localises to the cell inner membrane. Functionally, channel that opens in response to stretch forces in the membrane lipid bilayer. May participate in the regulation of osmotic pressure changes within the cell. This chain is Large-conductance mechanosensitive channel, found in Bdellovibrio bacteriovorus (strain ATCC 15356 / DSM 50701 / NCIMB 9529 / HD100).